The following is a 52-amino-acid chain: DNA-directed RNA polymerase subunit Rpo12 (52 aa).

The Zn(2+) site is built by Cys-13, Cys-30, and Cys-33.

Belongs to the archaeal Rpo12/eukaryotic RPC10 RNA polymerase subunit family. In terms of assembly, part of the RNA polymerase complex. It depends on Zn(2+) as a cofactor.

It localises to the cytoplasm. The enzyme catalyses RNA(n) + a ribonucleoside 5'-triphosphate = RNA(n+1) + diphosphate. In terms of biological role, DNA-dependent RNA polymerase (RNAP) catalyzes the transcription of DNA into RNA using the four ribonucleoside triphosphates as substrates. This is DNA-directed RNA polymerase subunit Rpo12 from Pyrobaculum neutrophilum (strain DSM 2338 / JCM 9278 / NBRC 100436 / V24Sta) (Thermoproteus neutrophilus).